The primary structure comprises 203 residues: AFG2-interacting ribosome maturation factor (203 aa).

As to quaternary structure, part of the 55LCC heterohexameric ATPase complex composed at least of AIRIM, AFG2A, AFG2B and CINP. Does not associate with pre-60S ribosomal particles. Phosphorylated on serines by CK2 kinase.

It is found in the nucleus. Its subcellular location is the cytoplasm. Its function is as follows. Part of the 55LCC heterohexameric ATPase complex which is chromatin-associated and promotes replisome proteostasis to maintain replication fork progression and genome stability. Required for replication fork progression, sister chromatid cohesion, and chromosome stability. The ATPase activity is specifically enhanced by replication fork DNA and is coupled to cysteine protease-dependent cleavage of replisome substrates in response to replication fork damage. Uses ATPase activity to process replisome substrates in S-phase, facilitating their proteolytic turnover from chromatin to ensure DNA replication and mitotic fidelity. Involved in the cytoplasmic maturation steps of pre-60S ribosomal particles by promoting the release of shuttling protein RSL24D1/RLP24 from the pre-ribosomal particles. The sequence is that of AFG2-interacting ribosome maturation factor from Homo sapiens (Human).